Reading from the N-terminus, the 120-residue chain is Large ribosomal subunit protein bL17 (120 aa).

This sequence belongs to the bacterial ribosomal protein bL17 family. Part of the 50S ribosomal subunit. Contacts protein L32.

This Desulforapulum autotrophicum (strain ATCC 43914 / DSM 3382 / VKM B-1955 / HRM2) (Desulfobacterium autotrophicum) protein is Large ribosomal subunit protein bL17.